A 140-amino-acid chain; its full sequence is Small ribosomal subunit protein uS19 (140 aa).

It belongs to the universal ribosomal protein uS19 family.

In terms of biological role, protein S19 forms a complex with S13 that binds strongly to the 16S ribosomal RNA. The polypeptide is Small ribosomal subunit protein uS19 (rps19) (Saccharolobus solfataricus (strain ATCC 35092 / DSM 1617 / JCM 11322 / P2) (Sulfolobus solfataricus)).